A 197-amino-acid polypeptide reads, in one-letter code: ATP synthase protein MI25 (197 aa).

Residues 30–50 traverse the membrane as a helical segment; it reads ISIYNEEMIVARCFIGFLIFS.

Belongs to the ATPase protein MI25 family. As to quaternary structure, F-type ATPases have 2 components, CF(1) - the catalytic core - and CF(0) - the membrane proton channel. CF(1) has five subunits: alpha(3), beta(3), gamma(1), delta(1), epsilon(1). CF(0) has three main subunits: a, b and c.

It localises to the mitochondrion membrane. Its function is as follows. This is one of the chains of the nonenzymatic component (CF(0) subunit) of the mitochondrial ATPase complex. The sequence is that of ATP synthase protein MI25 from Oryza sativa subsp. indica (Rice).